We begin with the raw amino-acid sequence, 1025 residues long: Beta-galactosidase (1025 aa).

The Proton donor role is filled by glutamate 482. The Nucleophile role is filled by glutamate 551.

This sequence belongs to the glycosyl hydrolase 2 family.

It carries out the reaction Hydrolysis of terminal non-reducing beta-D-galactose residues in beta-D-galactosides.. This Kluyveromyces lactis (strain ATCC 8585 / CBS 2359 / DSM 70799 / NBRC 1267 / NRRL Y-1140 / WM37) (Yeast) protein is Beta-galactosidase (LAC4).